We begin with the raw amino-acid sequence, 610 residues long: UvrABC system protein C (610 aa).

In terms of domain architecture, GIY-YIG spans 16–94 (SQPGVYRMYD…IKLYQPRYNV (79 aa)). A UVR domain is found at 204 to 239 (DQVINQLVSRMEQASQNLAFEEAARLRDQIQAVRRV).

This sequence belongs to the UvrC family. In terms of assembly, interacts with UvrB in an incision complex.

The protein resides in the cytoplasm. In terms of biological role, the UvrABC repair system catalyzes the recognition and processing of DNA lesions. UvrC both incises the 5' and 3' sides of the lesion. The N-terminal half is responsible for the 3' incision and the C-terminal half is responsible for the 5' incision. This chain is UvrABC system protein C, found in Cronobacter sakazakii (strain ATCC BAA-894) (Enterobacter sakazakii).